Consider the following 335-residue polypeptide: Galactosylgalactosylxylosylprotein 3-beta-glucuronosyltransferase 1 (335 aa).

The Cytoplasmic segment spans residues 1 to 6; that stretch reads MPKRRD. Positions 3–5 are essential for transport from endoplasmic reticulum to Golgi apparatus and interaction with SAR1A; the sequence is KRR. A helical; Signal-anchor for type II membrane protein transmembrane segment spans residues 7–27; the sequence is ILAIVLIVLPWTLLVTVWHQS. Over 28–335 the chain is Lumenal; sequence TIAPLLTTHK…KGFTDPTVEI (308 aa). Position 92-94 (92-94) interacts with UDP-alpha-D-glucuronate; the sequence is PTY. Residues T104 and T109 each carry the phosphothreonine modification. Position 123 (D123) interacts with UDP-alpha-D-glucuronate. N-linked (GlcNAc...) asparagine glycosylation occurs at N141. UDP-alpha-D-glucuronate-binding residues include R166 and R171. The N-linked (GlcNAc...) asparagine glycan is linked to N185. UDP-alpha-D-glucuronate is bound at residue 196–198; the sequence is DDD. A Mn(2+)-binding site is contributed by D198. The segment at 246-255 is interaction with galactose moiety of substrate glycoprotein; the sequence is FDPHRPFAID. E285 functions as the Proton donor/acceptor in the catalytic mechanism. An N-linked (GlcNAc...) asparagine glycan is attached at N304. 312 to 314 is a UDP-alpha-D-glucuronate binding site; that stretch reads HTR.

It belongs to the glycosyltransferase 43 family. Homodimer. Interacts with SAR1A. Mn(2+) serves as cofactor. Post-translationally, the soluble form derives from the membrane form by proteolytic processing.

It localises to the golgi apparatus membrane. The protein resides in the secreted. The catalysed reaction is 3-O-(beta-D-galactosyl-(1-&gt;3)-beta-D-galactosyl-(1-&gt;4)-beta-D-xylosyl)-L-seryl-[protein] + UDP-alpha-D-glucuronate = 3-O-(beta-D-GlcA-(1-&gt;3)-beta-D-Gal-(1-&gt;3)-beta-D-Gal-(1-&gt;4)-beta-D-Xyl)-L-seryl-[protein] + UDP + H(+). It functions in the pathway protein modification; protein glycosylation. In terms of biological role, involved in the biosynthesis of L2/HNK-1 carbohydrate epitope on glycoproteins. Can also play a role in glycosaminoglycan biosynthesis. Substrates include asialo-orosomucoid (ASOR), asialo-fetuin, and asialo-neural cell adhesion molecule. Requires sphingomyelin for activity: stearoyl-sphingomyelin was the most effective, followed by palmitoyl-sphingomyelin and lignoceroyl-sphingomyelin. Activity was demonstrated only for sphingomyelin with a saturated fatty acid and not for that with an unsaturated fatty acid, regardless of the length of the acyl group. This chain is Galactosylgalactosylxylosylprotein 3-beta-glucuronosyltransferase 1, found in Canis lupus familiaris (Dog).